The chain runs to 426 residues: Chaperone SurA (426 aa).

The N-terminal stretch at 1–19 (MGRVLVTIFVLFWPIGSFA) is a signal peptide. 2 consecutive PpiC domains span residues 169-270 (DAQY…KLLD) and 280-379 (VTQT…QVLD).

It is found in the periplasm. It catalyses the reaction [protein]-peptidylproline (omega=180) = [protein]-peptidylproline (omega=0). Its function is as follows. Chaperone involved in the correct folding and assembly of outer membrane proteins. Recognizes specific patterns of aromatic residues and the orientation of their side chains, which are found more frequently in integral outer membrane proteins. May act in both early periplasmic and late outer membrane-associated steps of protein maturation. This chain is Chaperone SurA, found in Nitrosococcus oceani (strain ATCC 19707 / BCRC 17464 / JCM 30415 / NCIMB 11848 / C-107).